We begin with the raw amino-acid sequence, 773 residues long: Serine/threonine-protein kinase CBK1 (773 aa).

Polar residues-rich tracts occupy residues 50 to 59 and 178 to 217; these read LHDQYSSHME and GNYNINGSQSSSPYHQPQTFYTNSNLSSGQLSAHRSSPQR. Disordered stretches follow at residues 50–111 and 177–275; these read LHDQ…GGNI and NGNY…QQQQ. Low complexity-rich tracts occupy residues 218 to 256 and 265 to 275; these read QPAQPLQQTTFTQLPQPSLPPQQQQQQQQQQQQQQQQQP and QQTQLQQQQQQ. A Protein kinase domain is found at 370 to 686; it reads FHTVQVIGKG…ADEIKSHPFF (317 aa). ATP is bound by residues 376 to 384 and K399; that span reads IGKGAFGEV. The active-site Proton acceptor is D493. The region spanning 687 to 771 is the AGC-kinase C-terminal domain; the sequence is RGVDWNTIRQ…SRFDYLTRKN (85 aa).

Belongs to the protein kinase superfamily. STE Ser/Thr protein kinase family. COT1 subfamily.

The catalysed reaction is L-seryl-[protein] + ATP = O-phospho-L-seryl-[protein] + ADP + H(+). It carries out the reaction L-threonyl-[protein] + ATP = O-phospho-L-threonyl-[protein] + ADP + H(+). Its function is as follows. Protein kinase that seems to play a role in the regulation of cell morphogenesis and proliferation. The sequence is that of Serine/threonine-protein kinase CBK1 (CBK1) from Candida glabrata (strain ATCC 2001 / BCRC 20586 / JCM 3761 / NBRC 0622 / NRRL Y-65 / CBS 138) (Yeast).